Consider the following 454-residue polypeptide: MRLTRAVTNPPWTVDVVVVGAGFAGLAAARELTRQGHEVLVFEGRDRVGGRSLTGRVAGVPADMGGSFIGPTQDAVLALATELGIPTTPTHRDGRNVIQWRGSARSYRGTIPKLSLTGLIDIGRLRWQFERIARGVPVAAPWDARRARELDDVSLGEWLRLVRATSSSRNLMAIMTRVTWGCEPDDVSMLHAARYVRAAGGLDRLLDVKNGAQQDRVPGGTQQIAQAAAAQLGARVLLNAAVRRIDRHGAGVTVTSDQGQAEAGFVIVAIPPAHRVAIEFDPPLPPEYQQLAHHWPQGRLSKAYAAYSTPFWRASGYSGQALSDEAPVFITFDVSPHADGPGILMGFVDARGFDSLPIEERRRDALRCFASLFGDEALDPLDYVDYRWGTEEFAPGGPTAAVPPGSWTKYGHWLREPVGPIHWASTETADEWTGYFDGAVRSGQRAAAEVAALL.

It belongs to the flavin monoamine oxidase family. The cofactor is FAD.

This chain is Putative flavin-containing monoamine oxidase AofH (aofH), found in Mycobacterium tuberculosis (strain CDC 1551 / Oshkosh).